The sequence spans 462 residues: Sensor histidine kinase RegB (462 aa).

The Cytoplasmic segment spans residues 1 to 25 (MILGPDGILNRDTRGDWVRLRTLIL). Residues 26-45 (LRWMAVAGQLAAIVVTDWYL) form a helical membrane-spanning segment. The Extracellular segment spans residues 46–51 (GVRLPM). Residues 52–70 (GLCFMAVGASVIANVIATF) traverse the membrane as a helical segment. Residues 71–78 (VFPQNRRL) are Cytoplasmic-facing. Residues 79–96 (TEFQALMILLFDLTQLSF) traverse the membrane as a helical segment. At 97–103 (LLFLTGG) the chain is on the extracellular side. A helical membrane pass occupies residues 104–123 (LTNPFALLILAPVTISALAL). The Cytoplasmic portion of the chain corresponds to 124–129 (ELRTTV). Residues 130 to 149 (ILGAIAIGLLTFTAYFHLPL) traverse the membrane as a helical segment. Topologically, residues 150 to 164 (ILADGSSLSVPRMFE) are extracellular. Residues 165 to 182 (FGFWLAIVIGILFLGLYS) form a helical membrane-spanning segment. Residues 183–462 (RRVAIEIRSM…PLGENVLIQT (280 aa)) are Cytoplasmic-facing. Residues 218–445 (AAAHELGTPL…IVEVIWPVDR (228 aa)) enclose the Histidine kinase domain. At histidine 221 the chain carries Phosphohistidine; by autocatalysis.

The protein localises to the cell inner membrane. It catalyses the reaction ATP + protein L-histidine = ADP + protein N-phospho-L-histidine.. Functionally, member of the two-component regulatory system RegB/RegA. Involved in the positive regulation of photosynthesis gene expression in response to anaerobiosis. Also involved in positive regulation of the cbbI and cbbII Calvin cycle CO2 fixation operons, as well as in regulation of expression of genes involved in alternative CO2 fixation pathways. Phosphorylates RegA/PrrA. The polypeptide is Sensor histidine kinase RegB (regB) (Cereibacter sphaeroides (strain ATCC 17023 / DSM 158 / JCM 6121 / CCUG 31486 / LMG 2827 / NBRC 12203 / NCIMB 8253 / ATH 2.4.1.) (Rhodobacter sphaeroides)).